The primary structure comprises 451 residues: mRNA cleavage and polyadenylation factor CLP1 (451 aa).

Residues Lys-75 and 136–141 (NTGKTA) contribute to the ATP site.

This sequence belongs to the Clp1 family. Clp1 subfamily. As to quaternary structure, component of a pre-mRNA cleavage factor complex. Interacts directly with PCF11.

The protein localises to the nucleus. Its function is as follows. Required for endonucleolytic cleavage during polyadenylation-dependent pre-mRNA 3'-end formation. This chain is mRNA cleavage and polyadenylation factor CLP1, found in Candida glabrata (strain ATCC 2001 / BCRC 20586 / JCM 3761 / NBRC 0622 / NRRL Y-65 / CBS 138) (Yeast).